Reading from the N-terminus, the 351-residue chain is Protein Wnt-4 (351 aa).

An N-terminal signal peptide occupies residues 1–22; the sequence is MSPEYFLRSLLLIILATFSANA. N-linked (GlcNAc...) asparagine glycosylation is found at asparagine 21 and asparagine 88. 11 disulfides stabilise this stretch: cysteine 78-cysteine 89, cysteine 128-cysteine 136, cysteine 138-cysteine 155, cysteine 206-cysteine 220, cysteine 208-cysteine 215, cysteine 280-cysteine 311, cysteine 296-cysteine 306, cysteine 310-cysteine 350, cysteine 326-cysteine 341, cysteine 328-cysteine 338, and cysteine 333-cysteine 334. Serine 212 carries the O-palmitoleoyl serine; by PORCN lipid modification. Asparagine 297 is a glycosylation site (N-linked (GlcNAc...) asparagine).

Belongs to the Wnt family. As to quaternary structure, interacts with CPZ. Post-translationally, palmitoleoylation is required for efficient binding to frizzled receptors. Depalmitoleoylation leads to Wnt signaling pathway inhibition. Predominantly expressed in the diencephalon neuromere D2.

It localises to the secreted. Its subcellular location is the extracellular space. The protein localises to the extracellular matrix. Ligand for members of the frizzled family of seven transmembrane receptors. Plays an important role in embryonic development. This chain is Protein Wnt-4 (WNT4), found in Gallus gallus (Chicken).